Reading from the N-terminus, the 663-residue chain is COBRA-like protein 9 (663 aa).

The first 23 residues, 1 to 23 (MGVLLPIFFGVLLLFTVTPPSMS), serve as a signal peptide directing secretion. 13 N-linked (GlcNAc...) asparagine glycosylation sites follow: Asn63, Asn111, Asn121, Asn169, Asn203, Asn326, Asn355, Asn397, Asn409, Asn429, Asn470, Asn550, and Asn561. The GPI-anchor amidated serine moiety is linked to residue Ser638. Positions 639 to 663 (GGRRNGAITVLSFITFYVAAFMVLL) are cleaved as a propeptide — removed in mature form.

It belongs to the COBRA family. In terms of tissue distribution, expressed only in flowers.

The protein localises to the cell membrane. This is COBRA-like protein 9 (COBL9) from Arabidopsis thaliana (Mouse-ear cress).